Reading from the N-terminus, the 238-residue chain is 2-C-methyl-D-erythritol 4-phosphate cytidylyltransferase (238 aa).

Belongs to the IspD/TarI cytidylyltransferase family. IspD subfamily.

The catalysed reaction is 2-C-methyl-D-erythritol 4-phosphate + CTP + H(+) = 4-CDP-2-C-methyl-D-erythritol + diphosphate. The protein operates within isoprenoid biosynthesis; isopentenyl diphosphate biosynthesis via DXP pathway; isopentenyl diphosphate from 1-deoxy-D-xylulose 5-phosphate: step 2/6. In terms of biological role, catalyzes the formation of 4-diphosphocytidyl-2-C-methyl-D-erythritol from CTP and 2-C-methyl-D-erythritol 4-phosphate (MEP). The sequence is that of 2-C-methyl-D-erythritol 4-phosphate cytidylyltransferase from Acinetobacter baumannii (strain ATCC 17978 / DSM 105126 / CIP 53.77 / LMG 1025 / NCDC KC755 / 5377).